We begin with the raw amino-acid sequence, 420 residues long: uncharacterized protein (420 aa).

Residues 1 to 25 (MRYAMNKIPALLLVGALIIATVASG) form the signal peptide. Cys-26 is subject to N-acetylcysteine. Cys-26 carries S-archaeol cysteine lipidation.

Belongs to the bacterial solute-binding protein 1 family.

It localises to the cell membrane. Probably part of a binding-protein-dependent transport system PH1036/38/39. This is an uncharacterized protein from Pyrococcus horikoshii (strain ATCC 700860 / DSM 12428 / JCM 9974 / NBRC 100139 / OT-3).